The sequence spans 509 residues: Maturase K (509 aa).

This sequence belongs to the intron maturase 2 family. MatK subfamily.

It is found in the plastid. It localises to the chloroplast. In terms of biological role, usually encoded in the trnK tRNA gene intron. Probably assists in splicing its own and other chloroplast group II introns. The polypeptide is Maturase K (Nicotiana acuminata (Acuminate tobacco)).